Here is a 227-residue protein sequence, read N- to C-terminus: Thymidine kinase 1 (227 aa).

Residues 15–22 (GPMFSGKT), 47–49 (DTR), and 91–94 (DEGQ) each bind ATP. The Proton acceptor role is filled by Glu-92. Phe-122 lines the substrate pocket. Cys-147 and Cys-150 together coordinate Zn(2+). Residues 166 to 170 (IELIG) and Tyr-175 contribute to the substrate site. Positions 179 and 182 each coordinate Zn(2+). Polar residues predominate over residues 187–196 (QNEGNSTKPS). The segment at 187-227 (QNEGNSTKPSKTARHSHSQSAPSVAPLAVNINPDDHLNNDY) is disordered.

The protein belongs to the thymidine kinase family. Interacts with calmodulin in the presence of Ca(2+).

The enzyme catalyses thymidine + ATP = dTMP + ADP + H(+). This chain is Thymidine kinase 1, found in Dictyostelium discoideum (Social amoeba).